The chain runs to 381 residues: Erythronate-4-phosphate dehydrogenase (381 aa).

Substrate contacts are provided by serine 45 and threonine 66. Residues aspartate 146, threonine 174, alanine 205–arginine 207, and aspartate 231 contribute to the NAD(+) site. Residue arginine 207 is part of the active site. Glutamate 236 is a catalytic residue. The Proton donor role is filled by histidine 253. Glycine 256 provides a ligand contact to NAD(+). Residue tyrosine 257 coordinates substrate.

It belongs to the D-isomer specific 2-hydroxyacid dehydrogenase family. PdxB subfamily. Homodimer.

The protein localises to the cytoplasm. It catalyses the reaction 4-phospho-D-erythronate + NAD(+) = (R)-3-hydroxy-2-oxo-4-phosphooxybutanoate + NADH + H(+). Its pathway is cofactor biosynthesis; pyridoxine 5'-phosphate biosynthesis; pyridoxine 5'-phosphate from D-erythrose 4-phosphate: step 2/5. Functionally, catalyzes the oxidation of erythronate-4-phosphate to 3-hydroxy-2-oxo-4-phosphonooxybutanoate. The chain is Erythronate-4-phosphate dehydrogenase from Stutzerimonas stutzeri (strain A1501) (Pseudomonas stutzeri).